Reading from the N-terminus, the 272-residue chain is Probable prolyl 4-hydroxylase 11 (272 aa).

Over 1 to 55 (MSKSTSVSTILYLRQRLQGLKIYETSDLIQHINTFDELVGEQVSVDVKIEEKTKD) the chain is Cytoplasmic. Residues 56-80 (MILLCSLSPLLTTLTCSMVKVAASL) traverse the membrane as a helical; Signal-anchor for type II membrane protein segment. Over 81–272 (RFPNERWLEV…KRHCLSLNLF (192 aa)) the chain is Lumenal. The region spanning 179–272 (NGETLQVINY…KRHCLSLNLF (94 aa)) is the Fe2OG dioxygenase domain. His-197, Asp-199, and His-261 together coordinate Fe cation.

It belongs to the P4HA family. Fe(2+) is required as a cofactor. L-ascorbate serves as cofactor.

The protein localises to the endoplasmic reticulum membrane. The catalysed reaction is L-prolyl-[collagen] + 2-oxoglutarate + O2 = trans-4-hydroxy-L-prolyl-[collagen] + succinate + CO2. Catalyzes the post-translational formation of 4-hydroxyproline in -Xaa-Pro-Gly- sequences in proline-rich peptide sequences of plant glycoproteins and other proteins. Hydroxyprolines are important constituent of many plant cell wall glycoproteins such as extensins, hydroxyproline-rich glycoproteins, lectins and arabinogalactan proteins. The sequence is that of Probable prolyl 4-hydroxylase 11 from Arabidopsis thaliana (Mouse-ear cress).